We begin with the raw amino-acid sequence, 445 residues long: Type II methyltransferase M.Bpa9945I (445 aa).

An SAM-dependent MTase C5-type domain is found at 1 to 444 (MIVIDLFSGA…RAVKDVINGH (444 aa)). Cys-136 is an active-site residue.

This sequence belongs to the class I-like SAM-binding methyltransferase superfamily. C5-methyltransferase family.

Its subcellular location is the cytoplasm. It catalyses the reaction a 2'-deoxycytidine in DNA + S-adenosyl-L-methionine = a 5-methyl-2'-deoxycytidine in DNA + S-adenosyl-L-homocysteine + H(+). Component of antiviral defense system DISARM (defense island system associated with restriction-modification), composed of DrmE, DrmA, DrmB, DrmC and DrmMII. DISARM is probably a multi-gene restriction module, this subunit is a DNA methylase. Expression of DISARM in B.subtilis (strain BEST7003) confers resistance to phages Nf, phi29, phi105, phi3T, SPO1, SPR and SPP1. Protection is over 10(7)-fold against phi3T, 10(4)-10(5)-fold against Nf, phi29, phi105 and SPR, 100-fold against SPO1 and 10-fold against SPP1. DISARM does not interfere with phage adsorption, but instead interferes with (phi3T) DNA replication early in its cycle, preventing replication, circularization and lysogeny and probably causes phage DNA degradation (DNA is degraded in SPP1-infected cells). Expression of this methylase alone leads to highly methylated phage, however they are still susceptible to the DISARM system. Its function is as follows. A methylase, recognizes the double-stranded sequence 5'-CCWGG-3', methylates C-2 on both strands. Phage Nf does not have any 5'-CCWGG-3' motifs but is still targeted by the DISARM system. This Bacillus paralicheniformis (strain ATCC 9945a / NCIMB 11709 / CD-2) protein is Type II methyltransferase M.Bpa9945I.